A 225-amino-acid polypeptide reads, in one-letter code: MSNETNCTLDFEQSVELFKEYNLFITAFLLFLTIILQYGYATRSKFIYILKMIVLWCFWPLNIAVGVISCIYPPNTGGLVAAIILTVFACLSFVGYWIQSIRLFKRCRSWWSFNPESNAVGSILLTNGQQCNFAIESVPMVLSPIIKNGVLYCEGQWLAKCEPDHLPKDIFVCTPDRRNIYRMVQKYTGDQSGNKKRFATFVYAKQSVDTGELESVATGGSSLYT.

At Met1–Glu20 the chain is on the virion surface side. The helical transmembrane segment at Tyr21–Ala41 threads the bilayer. Residues Thr42–Lys51 are Intravirion-facing. Residues Met52–Tyr72 traverse the membrane as a helical segment. At Pro73 to Gly77 the chain is on the virion surface side. The helical transmembrane segment at Gly78–Ile98 threads the bilayer. The Intravirion portion of the chain corresponds to Gln99–Thr225.

It belongs to the gammacoronaviruses M protein family. Homomultimer. Interacts with envelope E protein in the budding compartment of the host cell, which is located between endoplasmic reticulum and the Golgi complex. Forms a complex with HE and S proteins. Interacts with nucleocapsid N protein. This interaction probably participates in RNA packaging into the virus.

The protein resides in the virion membrane. The protein localises to the host Golgi apparatus membrane. In terms of biological role, component of the viral envelope that plays a central role in virus morphogenesis and assembly via its interactions with other viral proteins. This is Membrane protein from Gallus gallus (Chicken).